A 276-amino-acid polypeptide reads, in one-letter code: MIVIGRSIVHPYITNEYEPFAAEKQQILSIMAGNQEIYSFRTSDELSFDLNLRVNIITSALELFQSGFQFRTFQQSFCNPQYWKRTSLGGFELLPNIPPSIAIQDIFKNGKLYGTECATAMIIIFYKALLSLYEEETFNRLFANLLLYTWDYDQDLKLITKTGGDLVPGDLVYFKNPQVNPATIEWQGENTIYLGNFFFYGHGVGVKTKEEIIYALNERRVPYAFISAFLTDTITRIDSRLMSYHASPSTPQTSIGFIPIRDDAIVATVGNTTTVY.

The protein belongs to the bacillus TGase family.

The catalysed reaction is L-glutaminyl-[protein] + L-lysyl-[protein] = [protein]-L-lysyl-N(6)-5-L-glutamyl-[protein] + NH4(+). In terms of biological role, probably plays a role in the assembly of the spore coat proteins by catalyzing epsilon-(gamma-glutamyl)lysine cross-links. This is Protein-glutamine gamma-glutamyltransferase from Bacillus cereus (strain 03BB102).